The sequence spans 417 residues: 2-oxoglutarate and iron-dependent oxygenase JMJD4 (417 aa).

The 160-residue stretch at 142–301 folds into the JmjC domain; the sequence is CRDFPVEDVF…NMWRFLQQEL (160 aa). Residues His189, Asp191, and His269 each contribute to the Fe cation site.

Belongs to the JMJD6 family. As to quaternary structure, interacts with ETF1. Interacts with the ETF1-GSPT1 complex. Fe(2+) is required as a cofactor.

It localises to the cytoplasm. The catalysed reaction is L-lysyl-[protein] + 2-oxoglutarate + O2 = 4-hydroxy-L-lysyl-[protein] + succinate + CO2. Its function is as follows. Catalyzes the 2-oxoglutarate and iron-dependent C4-lysyl hydroxylation of ETF1 at 'Lys-63' thereby promoting the translational termination efficiency of ETF1. The sequence is that of 2-oxoglutarate and iron-dependent oxygenase JMJD4 (JMJD4) from Homo sapiens (Human).